Reading from the N-terminus, the 353-residue chain is tRNA-specific 2-thiouridylase MnmA 2 (353 aa).

6–13 (LLSGGVDS) serves as a coordination point for ATP. Residues 92–94 (NPD) form an interaction with target base in tRNA region. The Nucleophile role is filled by Cys97. The cysteines at positions 97 and 192 are disulfide-linked. Gly120 is an ATP binding site. Residues 142-144 (KDQ) are interaction with tRNA. Residue Cys192 is the Cysteine persulfide intermediate of the active site.

It belongs to the MnmA/TRMU family.

It is found in the cytoplasm. The enzyme catalyses S-sulfanyl-L-cysteinyl-[protein] + uridine(34) in tRNA + AH2 + ATP = 2-thiouridine(34) in tRNA + L-cysteinyl-[protein] + A + AMP + diphosphate + H(+). Its function is as follows. Catalyzes the 2-thiolation of uridine at the wobble position (U34) of tRNA, leading to the formation of s(2)U34. The protein is tRNA-specific 2-thiouridylase MnmA 2 of Bacteroides fragilis (strain YCH46).